Reading from the N-terminus, the 271-residue chain is Homeobox protein pal-1 (271 aa).

3 disordered regions span residues 1–25, 100–135, and 178–202; these read MSVD…TNVN, PPLS…ASSS, and GSAG…TNNV. 2 stretches are compositionally biased toward low complexity: residues 100 to 117 and 125 to 135; these read PPLS…YPSP and STSSGIGASSS. Polar residues predominate over residues 189–202; it reads DTKSLPTGPGTNNV. Residues 207–266 constitute a DNA-binding region (homeobox); the sequence is ADKYRMVYSDYQRLELEKEFHTSAFITSDRKSQLSTMLSLTERQIKIWFQNRRAKDRRDK.

The protein belongs to the Caudal homeobox family. Interacts with tir-1 and let-756.

It is found in the nucleus. The protein localises to the chromosome. The protein resides in the centromere. Its subcellular location is the kinetochore. Functionally, transcriptional activator. Interacts with promoter regions for tbx-8.9, tbx-9, elt-1, hnd-1, scrt-1, and vab-7 genes. Binds the sequence ATTTATGAC. Binds to the enhancer region of the hlh-1 gene promoter during embryonic body wall muscle development. Activates the gene for mab-5 in embryo development. Necessary for vab-7 expression in C blastomeres in the posterior of embryos. Required for posterior V6 neuroectoblast cell fate specification during postembryonic neurogenesis (patterning) which generates the characteristic ray lineage during male tail development. Binds to ced-3 promoter and activated expression which is crucial for tail-spike cell death. Has a role in E cell specification in endoderm development and body wall muscle development. This Caenorhabditis briggsae protein is Homeobox protein pal-1.